The primary structure comprises 140 residues: Organic hydroperoxide resistance protein-like (140 aa).

It belongs to the OsmC/Ohr family.

In Staphylococcus aureus (strain MRSA252), this protein is Organic hydroperoxide resistance protein-like.